Here is a 219-residue protein sequence, read N- to C-terminus: Mitochondrial fission factor homolog A (219 aa).

Over M1–M199 the chain is Cytoplasmic. Positions D164–R194 form a coiled coil. A helical; Anchor for type IV membrane protein membrane pass occupies residues T200 to L217. At R218–R219 the chain is on the extracellular side.

It belongs to the Tango11 family.

Its subcellular location is the mitochondrion outer membrane. The protein resides in the peroxisome. It is found in the cytoplasmic vesicle. It localises to the secretory vesicle. The protein localises to the synaptic vesicle. Functionally, plays a role in mitochondrial and peroxisomal fission. Promotes the recruitment and association of the fission mediator dynamin-related protein 1 (DNM1L) to the mitochondrial surface. The protein is Mitochondrial fission factor homolog A (mff-a) of Xenopus laevis (African clawed frog).